Reading from the N-terminus, the 366-residue chain is Methyltransferase calH (366 aa).

S-adenosyl-L-methionine is bound by residues Thr-189, Asp-216, and 245-246 (NA).

The protein belongs to the class I-like SAM-binding methyltransferase superfamily.

It participates in secondary metabolite biosynthesis. Its function is as follows. Methyltransferase; part of the gene cluster that mediates the biosynthesis of calbistrin A and related compounds. Calbistrin A is a secondary metabolite with an interesting structure that was recently found to have bioactivity against leukemia cells. It consists of two polyketides linked by an ester bond: a bicyclic decalin containing polyketide and a linear 12 carbon dioic acid structure. The polyketide synthase calA is probably responsible for forming the decalin moiety. Because calA lacks a designated enoylreductase (ER) domain, the required activity is provided by the trans-enoyl reductase calK. Following release from the PKS, calF then probably catalyzes the oxidation and the subsequent Diels Alder cycloisomerization that lead to the formation of the decalin moiety. The decalin polyketide backbone includes two C-methyl groups, at C7 and C11 in backbone, of which the C7 position is probably methylated by the methyltransferase domain of calA. A candidate for adding the methyl group at C11, if not done by CalA, is the cluster methyltransferase calH. Several additional tailoring enzymes within the cluster could be involved in the modification of the decalin polyketide product. Those include the 3 cytochrome P450 monooxygenases CalE, CalG and CalL, of which one might be responsible for the introduction of the extra hydroxyl group attached to the backbone of the decalin moiety, at position C9 in the backbone, that allows for attachment of the linear moiety. One tailoring enzyme activity that is expected to be involved in biosynthesis of calbistrin is an acyltransferase for connecting the two polyketide synthase products, and which could be performed by the cluster acyltransferase calJ. The enzyme responsible for the biosynthesis of the linear moiety, probably a second PKS, has not been identified yet. The sequence is that of Methyltransferase calH from Penicillium decumbens.